A 194-amino-acid chain; its full sequence is Isopentenyl-diphosphate Delta-isomerase (194 aa).

2 residues coordinate Mn(2+): His-35 and His-42. A Nudix hydrolase domain is found at Pro-40–Asp-174. The active site involves Cys-77. His-79 provides a ligand contact to Mn(2+). Glu-97 provides a ligand contact to Mg(2+). 2 residues coordinate Mn(2+): Glu-124 and Glu-126. Residue Glu-126 is part of the active site.

The protein belongs to the IPP isomerase type 1 family. Mg(2+) serves as cofactor. Mn(2+) is required as a cofactor.

It localises to the cytoplasm. The catalysed reaction is isopentenyl diphosphate = dimethylallyl diphosphate. Its pathway is isoprenoid biosynthesis; dimethylallyl diphosphate biosynthesis; dimethylallyl diphosphate from isopentenyl diphosphate: step 1/1. Catalyzes the 1,3-allylic rearrangement of the homoallylic substrate isopentenyl (IPP) to its highly electrophilic allylic isomer, dimethylallyl diphosphate (DMAPP). In Frankia alni (strain DSM 45986 / CECT 9034 / ACN14a), this protein is Isopentenyl-diphosphate Delta-isomerase.